A 1486-amino-acid chain; its full sequence is Chromosome partition protein MukB (1486 aa).

34-41 lines the ATP pocket; the sequence is GGNGAGKS. Coiled coils occupy residues 326–418, 444–480, and 509–603; these read LEAD…QYNQ, LETF…QAYQ, and RHLA…RAPV. The flexible hinge stretch occupies residues 666–783; sequence PGGSEDQRLN…EVPLFGRAAR (118 aa). Coiled-coil stretches lie at residues 835–923, 977–1115, and 1209–1265; these read EAEI…AKLE, EMLS…TAKA, and VEAI…LQSV.

Belongs to the SMC family. MukB subfamily. As to quaternary structure, homodimerization via its hinge domain. Binds to DNA via its C-terminal region. Interacts, and probably forms a ternary complex, with MukE and MukF via its C-terminal region. The complex formation is stimulated by calcium or magnesium. Interacts with tubulin-related protein FtsZ.

The protein localises to the cytoplasm. The protein resides in the nucleoid. Its function is as follows. Plays a central role in chromosome condensation, segregation and cell cycle progression. Functions as a homodimer, which is essential for chromosome partition. Involved in negative DNA supercoiling in vivo, and by this means organize and compact chromosomes. May achieve or facilitate chromosome segregation by condensation DNA from both sides of a centrally located replisome during cell division. In Escherichia coli O7:K1 (strain IAI39 / ExPEC), this protein is Chromosome partition protein MukB.